The chain runs to 435 residues: Phosphomethylpyrimidine synthase (435 aa).

Residues N67, M96, Y125, H163, 185–187 (SRG), 226–229 (DGLR), and E265 each bind substrate. Residue H269 coordinates Zn(2+). Residue Y292 participates in substrate binding. H333 provides a ligand contact to Zn(2+). [4Fe-4S] cluster-binding residues include C408, C411, and C415.

The protein belongs to the ThiC family. [4Fe-4S] cluster serves as cofactor.

The catalysed reaction is 5-amino-1-(5-phospho-beta-D-ribosyl)imidazole + S-adenosyl-L-methionine = 4-amino-2-methyl-5-(phosphooxymethyl)pyrimidine + CO + 5'-deoxyadenosine + formate + L-methionine + 3 H(+). The protein operates within cofactor biosynthesis; thiamine diphosphate biosynthesis. Its function is as follows. Catalyzes the synthesis of the hydroxymethylpyrimidine phosphate (HMP-P) moiety of thiamine from aminoimidazole ribotide (AIR) in a radical S-adenosyl-L-methionine (SAM)-dependent reaction. The polypeptide is Phosphomethylpyrimidine synthase (Thermus thermophilus (strain ATCC BAA-163 / DSM 7039 / HB27)).